A 351-amino-acid chain; its full sequence is 2-Hydroxyacid oxidase 2 (351 aa).

Residues 2-351 enclose the FMN hydroxy acid dehydrogenase domain; it reads SLVCLTDFQA…NRNLVQFSRL (350 aa). Residues 77–79, S106, and Q128 each bind FMN; that span reads PTG. A 2-oxocarboxylate is bound at residue Y130. T156 serves as a coordination point for FMN. R165 contributes to the a 2-oxocarboxylate binding site. T178 carries the post-translational modification Phosphothreonine. FMN is bound at residue K222. Catalysis depends on H246, which acts as the Proton acceptor. A 2-oxocarboxylate is bound at residue R249. Residues 277-281 and 300-301 contribute to the FMN site; these read DGGVR and GR. Positions 349–351 match the Microbody targeting signal motif; sequence SRL.

It belongs to the FMN-dependent alpha-hydroxy acid dehydrogenase family. In terms of assembly, homotetramer. It depends on FMN as a cofactor. As to expression, expressed in the liver and kidney.

It localises to the peroxisome. The catalysed reaction is a (2S)-2-hydroxycarboxylate + O2 = a 2-oxocarboxylate + H2O2. The enzyme catalyses 2-hydroxyhexadecanoate + O2 = 2-oxohexadecanoate + H2O2. It catalyses the reaction 2-hydroxyoctanoate + O2 = 2-oxooctanoate + H2O2. It participates in lipid metabolism; fatty acid metabolism. Oxidase that catalyzes the oxidation of medium and long chain hydroxyacids such as 2-hydroxyhexadecanoate and 2-hydroxyoctanoate, to the correspondong 2-oxoacids. Its role in the oxidation of 2-hydroxy fatty acids may contribute to the general pathway of fatty acid alpha-oxidation. Active in vitro with the artificial electron acceptor 2,6-dichlorophenolindophenol (DCIP), but O2 is believed to be the physiological electron acceptor, leading to the production of H2O2. Is not active on glycolate, glyoxylate, L-lactate and 2-hydroxybutanoate. In Homo sapiens (Human), this protein is 2-Hydroxyacid oxidase 2 (HAO2).